An 858-amino-acid chain; its full sequence is Phosphoenolpyruvate carboxylase (858 aa).

Catalysis depends on residues H145 and K531.

The protein belongs to the PEPCase type 1 family. It depends on Mg(2+) as a cofactor.

The catalysed reaction is oxaloacetate + phosphate = phosphoenolpyruvate + hydrogencarbonate. In terms of biological role, forms oxaloacetate, a four-carbon dicarboxylic acid source for the tricarboxylic acid cycle. This is Phosphoenolpyruvate carboxylase from Thermus thermophilus (strain ATCC BAA-163 / DSM 7039 / HB27).